A 157-amino-acid chain; its full sequence is Small ribosomal subunit protein uS7 (157 aa).

The protein belongs to the universal ribosomal protein uS7 family. Part of the 30S ribosomal subunit. Contacts proteins S9 and S11.

One of the primary rRNA binding proteins, it binds directly to 16S rRNA where it nucleates assembly of the head domain of the 30S subunit. Is located at the subunit interface close to the decoding center, probably blocks exit of the E-site tRNA. The protein is Small ribosomal subunit protein uS7 of Variovorax paradoxus (strain S110).